The primary structure comprises 243 residues: Small ribosomal subunit protein uS3 (243 aa).

Positions 39-107 constitute a KH type-2 domain; it reads MRKFVMSELK…ETHLNIVEVR (69 aa). Positions 214–243 are disordered; the sequence is ASERRAMEGDAQGPASRDRDRDRDRRRDNA. Residues 229–243 are compositionally biased toward basic and acidic residues; the sequence is SRDRDRDRDRRRDNA.

It belongs to the universal ribosomal protein uS3 family. As to quaternary structure, part of the 30S ribosomal subunit. Forms a tight complex with proteins S10 and S14.

Its function is as follows. Binds the lower part of the 30S subunit head. Binds mRNA in the 70S ribosome, positioning it for translation. This is Small ribosomal subunit protein uS3 from Rhizobium johnstonii (strain DSM 114642 / LMG 32736 / 3841) (Rhizobium leguminosarum bv. viciae).